The chain runs to 551 residues: Putative ABC transporter ATP-binding protein BT9727_3105 (551 aa).

2 ABC transporter domains span residues 5 to 243 (AEIN…FRPF) and 293 to 525 (LSAE…SINR). Residues 39–46 (GGSGSGKT) and 327–334 (GKNGTGKS) contribute to the ATP site.

It belongs to the ABC transporter superfamily.

It localises to the cell membrane. Functionally, probably part of an ABC transporter complex. Responsible for energy coupling to the transport system. This Bacillus thuringiensis subsp. konkukian (strain 97-27) protein is Putative ABC transporter ATP-binding protein BT9727_3105.